The following is a 453-amino-acid chain: Homogentisate 1,2-dioxygenase (453 aa).

H306 acts as the Proton acceptor in catalysis. 2 residues coordinate Fe cation: H349 and E355. Y364 and H385 together coordinate homogentisate. H385 is a Fe cation binding site.

The protein belongs to the homogentisate dioxygenase family. As to quaternary structure, hexamer; dimer of trimers. Fe cation is required as a cofactor.

The catalysed reaction is homogentisate + O2 = 4-maleylacetoacetate + H(+). The protein operates within amino-acid degradation; L-phenylalanine degradation; acetoacetate and fumarate from L-phenylalanine: step 4/6. Involved in the catabolism of homogentisate (2,5-dihydroxyphenylacetate or 2,5-OH-PhAc), a central intermediate in the degradation of phenylalanine and tyrosine. Catalyzes the oxidative ring cleavage of the aromatic ring of homogentisate to yield maleylacetoacetate. This Rhizobium johnstonii (strain DSM 114642 / LMG 32736 / 3841) (Rhizobium leguminosarum bv. viciae) protein is Homogentisate 1,2-dioxygenase.